A 230-amino-acid polypeptide reads, in one-letter code: Heptaprenylglyceryl phosphate synthase (230 aa).

Sn-glycerol 1-phosphate is bound at residue lysine 12. Residues aspartate 14 and threonine 40 each contribute to the Mg(2+) site. Sn-glycerol 1-phosphate-binding positions include 159 to 164 (YIEYSG), glycine 189, and 209 to 210 (GD).

Belongs to the GGGP/HepGP synthase family. Group I subfamily. As to quaternary structure, homodimer. Mg(2+) is required as a cofactor.

It carries out the reaction sn-glycerol 1-phosphate + all-trans-heptaprenyl diphosphate = 3-heptaprenyl-sn-glycero-1-phosphate + diphosphate. Its pathway is membrane lipid metabolism; glycerophospholipid metabolism. Its function is as follows. Prenyltransferase that catalyzes in vivo the transfer of the heptaprenyl moiety of heptaprenyl pyrophosphate (HepPP; 35 carbon atoms) to the C3 hydroxyl of sn-glycerol-1-phosphate (G1P), producing heptaprenylglyceryl phosphate (HepGP). This reaction is an ether-bond-formation step in the biosynthesis of archaea-type G1P-based membrane lipids found in Bacillales. To a much lesser extent, is also able to use geranylgeranyl diphosphate (GGPP; C20) as the prenyl donor. This chain is Heptaprenylglyceryl phosphate synthase, found in Staphylococcus aureus (strain NCTC 8325 / PS 47).